The primary structure comprises 249 residues: Seipin homolog (249 aa).

Residues 1–10 (MGYLVKLFKL) lie on the Cytoplasmic side of the membrane. Residues 11 to 31 (VVWMLVIGLFSIPSLVSYVIF) form a helical membrane-spanning segment. The Lumenal portion of the chain corresponds to 32–212 (YDTVIPHSVI…GMRWFMYTHK (181 aa)). Residues 213-233 (VSAFLVFTSLFWFTGITSTII) traverse the membrane as a helical segment. Residues 234–249 (TYLIVSSTSETKATRR) lie on the Cytoplasmic side of the membrane.

This sequence belongs to the seipin family.

It localises to the endoplasmic reticulum membrane. Involved in lipid metabolism and lipid droplet (LD) morphology, number, and size. Facilitates initiation of LD formation, and ensures that vectorial budding of LDs from the ER is directed towards the cytoplasm. The chain is Seipin homolog from Schizosaccharomyces pombe (strain 972 / ATCC 24843) (Fission yeast).